The primary structure comprises 170 residues: Photosystem I assembly protein Ycf3 (170 aa).

3 TPR repeats span residues 35 to 68 (AFTY…EIDP), 72 to 105 (SYIL…NPFL), and 120 to 153 (GEQA…TPGN).

Belongs to the Ycf3 family.

The protein localises to the plastid. It is found in the chloroplast thylakoid membrane. Functionally, essential for the assembly of the photosystem I (PSI) complex. May act as a chaperone-like factor to guide the assembly of the PSI subunits. This is Photosystem I assembly protein Ycf3 from Zea mays (Maize).